The primary structure comprises 723 residues: Fatty acid oxidation complex subunit alpha (723 aa).

An enoyl-CoA hydratase/isomerase region spans residues 1 to 189; sequence MIYQAKTLQV…KVGLLDAIVD (189 aa). Residue Asp-296 coordinates substrate. Positions 311–723 are 3-hydroxyacyl-CoA dehydrogenase; that stretch reads SQDTQHAAVL…FYSAQQVSAL (413 aa). Residues Met-325, Asp-344, 401 to 403, Lys-408, and Ser-430 contribute to the NAD(+) site; that span reads VVE. His-451 functions as the For 3-hydroxyacyl-CoA dehydrogenase activity in the catalytic mechanism. Asn-454 provides a ligand contact to NAD(+). Asn-501 and Tyr-661 together coordinate substrate.

In the N-terminal section; belongs to the enoyl-CoA hydratase/isomerase family. This sequence in the C-terminal section; belongs to the 3-hydroxyacyl-CoA dehydrogenase family. In terms of assembly, heterotetramer of two alpha chains (FadB) and two beta chains (FadA).

It catalyses the reaction a (3S)-3-hydroxyacyl-CoA + NAD(+) = a 3-oxoacyl-CoA + NADH + H(+). It carries out the reaction a (3S)-3-hydroxyacyl-CoA = a (2E)-enoyl-CoA + H2O. The enzyme catalyses a 4-saturated-(3S)-3-hydroxyacyl-CoA = a (3E)-enoyl-CoA + H2O. The catalysed reaction is (3S)-3-hydroxybutanoyl-CoA = (3R)-3-hydroxybutanoyl-CoA. It catalyses the reaction a (3Z)-enoyl-CoA = a 4-saturated (2E)-enoyl-CoA. It carries out the reaction a (3E)-enoyl-CoA = a 4-saturated (2E)-enoyl-CoA. Its pathway is lipid metabolism; fatty acid beta-oxidation. Its function is as follows. Involved in the aerobic and anaerobic degradation of long-chain fatty acids via beta-oxidation cycle. Catalyzes the formation of 3-oxoacyl-CoA from enoyl-CoA via L-3-hydroxyacyl-CoA. It can also use D-3-hydroxyacyl-CoA and cis-3-enoyl-CoA as substrate. The sequence is that of Fatty acid oxidation complex subunit alpha from Vibrio cholerae serotype O1 (strain ATCC 39315 / El Tor Inaba N16961).